A 125-amino-acid chain; its full sequence is Small ribosomal subunit protein eS8 (125 aa).

Residues 1 to 35 (MQWQGRSVRKPSGGRYHTSQGKKRTEIGRAPAETH) form a disordered region.

It belongs to the eukaryotic ribosomal protein eS8 family. Part of the 30S ribosomal subunit.

The protein is Small ribosomal subunit protein eS8 of Methanoculleus marisnigri (strain ATCC 35101 / DSM 1498 / JR1).